Reading from the N-terminus, the 498-residue chain is Lycopene beta cyclase, chloroplastic/chromoplastic (498 aa).

Residues 1–79 constitute a chloroplast and chromoplast transit peptide; sequence MDTLLRTPNN…ELPMYDPSKG (79 aa). 84–112 contributes to the NAD(+) binding site; it reads LAVVGGGPAGLAVAQQVSEAGLSVCSIDP. An FLEET motif motif is present at residues 293–297; it reads FLEET.

The protein belongs to the lycopene cyclase family. As to quaternary structure, monomer. FAD serves as cofactor. The cofactor is NADPH.

The protein resides in the plastid. Its subcellular location is the chloroplast. It is found in the chromoplast. It carries out the reaction a carotenoid psi-end group = a carotenoid beta-end derivative. The enzyme catalyses all-trans-lycopene = gamma-carotene. The catalysed reaction is gamma-carotene = all-trans-beta-carotene. It catalyses the reaction all-trans-neurosporene = beta-zeacarotene. It carries out the reaction beta-zeacarotene = 7,8-dihydro-beta-carotene. The protein operates within carotenoid biosynthesis; beta-carotene biosynthesis. It functions in the pathway carotenoid biosynthesis; beta-zeacarotene biosynthesis. Catalyzes the double cyclization reaction which converts lycopene to beta-carotene. Catalyzes the double cyclization reaction which converts neurosporene to 7,8-dihydro-beta-carotene. The protein is Lycopene beta cyclase, chloroplastic/chromoplastic of Capsicum annuum (Capsicum pepper).